The chain runs to 274 residues: Large ribosomal subunit protein uL2 (274 aa).

Positions 223–274 (VAMNPVDHPHGGGEGRTSGGRHPVTPWGVPTKGYKTRSNKRTDKYIVRRRNK) are disordered.

It belongs to the universal ribosomal protein uL2 family. As to quaternary structure, part of the 50S ribosomal subunit. Forms a bridge to the 30S subunit in the 70S ribosome.

One of the primary rRNA binding proteins. Required for association of the 30S and 50S subunits to form the 70S ribosome, for tRNA binding and peptide bond formation. It has been suggested to have peptidyltransferase activity; this is somewhat controversial. Makes several contacts with the 16S rRNA in the 70S ribosome. The chain is Large ribosomal subunit protein uL2 from Shewanella putrefaciens (strain CN-32 / ATCC BAA-453).